The sequence spans 275 residues: MLKSIKSSGVTAVLDHDGFNKRIRVVRYDGAIEKALPDIVAAAKEENAEKIIVYAKQHDEPILAKQLFAPEGYLKGYYLGHSACVMVRYLSESRRQTDSYTEEQEIIEAIYRTAPRLRNDSTPVFTMRKAETNDMYQLSMLYKKVFRTYPTPVFDPAYIEKTMNANTVYYIMLDHDRLISAASAEINPELGHAEITDCAVLPEYRGHSLTSFLIEALEKEMAGEDIVHVFSLARASSFGMNAVLYHSGYQYGGRLINNCFIAEGLENMNIWCKQL.

An N-acetyltransferase domain is found at 125 to 271; sequence FTMRKAETND…AEGLENMNIW (147 aa).

It belongs to the acetyltransferase family.

The enzyme catalyses (3S)-3,6-diaminohexanoate + acetyl-CoA = (3S)-6-acetamido-3-aminohexanoate + CoA + H(+). In terms of biological role, in vitro, is able to catalyze the acetylation of beta-lysine to N6-acetyl-beta-lysine, an archaeal osmolyte produced by methanogenic archaea. Its physiological function has not yet been elucidated. In Bacillus subtilis (strain 168), this protein is N-acetyltransferase YodP (yodP).